The chain runs to 120 residues: Ubiquitin domain-containing protein TINCR (120 aa).

The region spanning 14–83 (YHIKVHLADE…LQDGSVLLLV (70 aa)) is the Ubiquitin-like domain.

Detected in stratum corneum (at protein level).

In Homo sapiens (Human), this protein is Ubiquitin domain-containing protein TINCR.